We begin with the raw amino-acid sequence, 494 residues long: Ceramide glucosyltransferase (494 aa).

Topologically, residues 1–6 are lumenal; it reads MPLLMD. The chain crosses the membrane as a helical span at residues 7-27; sequence GLAYAGAIWSLIVFCVQAIGL. Topologically, residues 28–337 are cytoplasmic; that stretch reads YQLFRSYSRP…VRWLRVRKWT (310 aa). Position 95 (Asp95) is a short sequence motif, D1. Position 160 (Asp160) is a short sequence motif, D2. Residue Asp285 is a short sequence motif, D3. Catalysis depends on Asp285, which acts as the Proton acceptor. A (Q/R)XXRW motif is present at residues 326–330; sequence RRVRW. The helical transmembrane segment at 338–358 threads the bilayer; sequence VLLATLVEPGVESMVCCMAFA. At 359–380 the chain is on the lumenal side; sequence HALTTTPWCPNPADWPIPHTWT. The chain crosses the membrane as a helical span at residues 381-401; sequence ALWSIWLAAIAVWATLDYVVY. Residues 402–428 lie on the Cytoplasmic side of the membrane; sequence HFLHSCRSIEKDADSPDFAQGNELMKR. Residues 429–449 form a helical membrane-spanning segment; sequence PFGAWILAWIGREILALPIWT. The Lumenal segment spans residues 450 to 494; it reads RAVLLGTTVTWRGTKFKVRPDQSVVDIPNAGAKSNGIGSTNRKVR.

The protein belongs to the glycosyltransferase 2 family.

Its subcellular location is the golgi apparatus membrane. The enzyme catalyses an N-acylsphing-4-enine + UDP-alpha-D-glucose = a beta-D-glucosyl-(1&lt;-&gt;1')-N-acylsphing-4-enine + UDP + H(+). The protein operates within lipid metabolism; sphingolipid metabolism. In terms of biological role, catalyzes the final step in the biosynthesis of the membrane lipid glucosylceramide (GluCer), the transfer of glucose to ceramide. Glucosylceramides play important roles in growth, differentiation and pathogenicity. This is Ceramide glucosyltransferase from Pyricularia oryzae (strain 70-15 / ATCC MYA-4617 / FGSC 8958) (Rice blast fungus).